The primary structure comprises 151 residues: Guanylate kinase homolog (151 aa).

Positions 1–141 (MEREGVDYHY…AYSKLIQILQ (141 aa)) constitute a Guanylate kinase-like domain.

It belongs to the guanylate kinase family.

This chain is Guanylate kinase homolog, found in Vaccinia virus (strain Copenhagen) (VACV).